Here is a 357-residue protein sequence, read N- to C-terminus: Cinnamyl alcohol dehydrogenase 1 (357 aa).

The 329-residue stretch at 20-348 (GILSPYTYTL…KNDVRYRFVV (329 aa)) folds into the Enoyl reductase (ER) domain. Zn(2+) is bound at residue Cys-47. Position 49 (Ser-49) interacts with NADP(+). Residues His-69, Glu-70, Cys-100, Cys-103, Cys-106, Cys-114, and Cys-163 each contribute to the Zn(2+) site. Residues Thr-167, 188-193 (GLGGVG), 211-216 (SSSDKK), Thr-251, Gly-275, and 298-300 (SFI) contribute to the NADP(+) site.

It belongs to the zinc-containing alcohol dehydrogenase family. Homodimer. Zn(2+) is required as a cofactor. In terms of tissue distribution, accumulates mainly in the placenta of red fruits, and, to a lower extent, in green fruits placenta, pericarp and seeds.

Its subcellular location is the cytoplasm. The enzyme catalyses (E)-cinnamyl alcohol + NADP(+) = (E)-cinnamaldehyde + NADPH + H(+). It carries out the reaction (E)-coniferol + NADP(+) = (E)-coniferaldehyde + NADPH + H(+). The catalysed reaction is (E)-sinapyl alcohol + NADP(+) = (E)-sinapaldehyde + NADPH + H(+). It catalyses the reaction (E)-4-coumaroyl alcohol + NADP(+) = (E)-4-coumaraldehyde + NADPH + H(+). The enzyme catalyses (E)-caffeyl alcohol + NADP(+) = (E)-caffeyl aldehyde + NADPH + H(+). It carries out the reaction vanillin + NADPH + H(+) = 4-hydroxy-3-methoxy-benzenemethanol + NADP(+). Its pathway is aromatic compound metabolism; phenylpropanoid biosynthesis. With respect to regulation, inhibited, in a concentration-dependent manner, by N-(O-hydroxyphenyl) sulfinamoyltertiobutyl acetate (OHPAS), a specific cinnamyl alcohol dehydrogenase (CAD) inhibitor, as well as by ethylenediaminetetraacetic acid (EDTA), a metalloenzyme inhibitor. Involved in the biosynthesis of capsinoids natural products (e.g. capsiate), non-pungent alkaloids synthesized from phenylpropanoid intermediates in the placental tissue of sweet chili pepper fruit acting as repellant on herbivorous mammals. Catalyzes the reduction of vanillin to generate vanillyl alcohol, a precursor of capsiate, a non-pungent component that accumulates mainly in the placenta of mature red fruits, but also in green fruits to lower levels. Involved in lignin biosynthesis. Catalyzes the final step specific for the production of lignin monomers. Mediates the conversion of cinnamaldehyde and coniferaldehyde to cinnamyl alcohol and coniferyl alcohol, respectively. Catalyzes the NADPH-dependent reduction of 5-hydroxyconiferaldehyde, sinapaldehyde, 4-coumaraldehyde and caffeyl aldehyde to their respective alcohols. The polypeptide is Cinnamyl alcohol dehydrogenase 1 (Capsicum annuum (Capsicum pepper)).